The following is a 445-amino-acid chain: Cyclic GMP-AMP phosphodiesterase SMPDL3A (445 aa).

Residues 1–22 (MALLGNFLCCLLVAWLCGPGLG) form the signal peptide. Residues D42 and H44 each coordinate Zn(2+). C59 and C78 are disulfide-bonded. N66 carries an N-linked (GlcNAc...) asparagine glycan. Zn(2+) is bound at residue D107. Position 111 (H111) interacts with ATP. Residue N128 is glycosylated (N-linked (GlcNAc...) asparagine). N148 lines the Zn(2+) pocket. Residues N148 and H149 each contribute to the ATP site. N-linked (GlcNAc...) asparagine glycans are attached at residues N219 and N235. Residue H249 coordinates Zn(2+). Y257 lines the ATP pocket. Zn(2+) contacts are provided by H290 and H292. 2 N-linked (GlcNAc...) asparagine glycosylation sites follow: N353 and N364. 2 disulfides stabilise this stretch: C417/C421 and C427/C440.

Belongs to the acid sphingomyelinase family. As to quaternary structure, monomer. Homodimer; homodimerizes following 2',3'-cGAMP-binding. It depends on Zn(2+) as a cofactor. Post-translationally, N-glycosylated. As to expression, detected in blood serum (at protein level).

The protein resides in the secreted. It catalyses the reaction 2',3'-cGAMP + H2O = 5'-pGpA(2'-5') + H(+). It carries out the reaction 5'-pGpA(2'-5') + H2O = 5'-GpA(2'-5') + phosphate. The enzyme catalyses a ribonucleoside 5'-triphosphate + H2O = a ribonucleoside 5'-diphosphate + phosphate + H(+). The catalysed reaction is ATP + H2O = ADP + phosphate + H(+). With respect to regulation, requires micromolar levels of Zn(2+) for activity. Inhibited by millimolar levels of Zn(2+). Functionally, cyclic-nucleotide phosphodiesterase that acts as a negative regulator of innate immunity by mediating degradation of 2',3'-cGAMP, thereby inhibiting the cGAS-STING signaling. Specifically linearizes 2',3'-cGAMP into 2'5'-bond pGpA and further hydrolyzes pGpA to produce GpA. Also has in vitro nucleotide phosphodiesterase activity with nucleoside triphosphates, such as ATP. Has in vitro activity with p-nitrophenyl-TMP. Has lower activity with nucleoside diphosphates, and no activity with nucleoside monophosphates. Has in vitro activity with CDP-choline, giving rise to CMP and phosphocholine. Has in vitro activity with CDP-ethanolamine. Does not have sphingomyelin phosphodiesterase activity. This is Cyclic GMP-AMP phosphodiesterase SMPDL3A from Mus musculus (Mouse).